The sequence spans 209 residues: Large ribosomal subunit protein uL3 (209 aa).

Residues 133-152 (THGNSLSHRVPGSIGQNQTP) are disordered. An N5-methylglutamine modification is found at glutamine 150.

It belongs to the universal ribosomal protein uL3 family. In terms of assembly, part of the 50S ribosomal subunit. Forms a cluster with proteins L14 and L19. In terms of processing, methylated by PrmB.

Functionally, one of the primary rRNA binding proteins, it binds directly near the 3'-end of the 23S rRNA, where it nucleates assembly of the 50S subunit. This chain is Large ribosomal subunit protein uL3, found in Yersinia enterocolitica serotype O:8 / biotype 1B (strain NCTC 13174 / 8081).